The sequence spans 216 residues: Transmembrane protein 163a (216 aa).

The Cytoplasmic segment spans residues 1 to 15 (MRLKPHEAQSYRKKA). The helical transmembrane segment at 16 to 36 (LWVSWISIVVTLILAVAGFTV) threads the bilayer. At 37–43 (SFMRHSA) the chain is on the extracellular side. A helical membrane pass occupies residues 44–64 (SAFGFAFDATLDVLSSIIVLW). Residues 65–77 (RYSNAAAVHSAHR) are Cytoplasmic-facing. The chain crosses the membrane as a helical span at residues 78–98 (EYIACVILGVIFILSSLCILG). Over 99–114 (KAIHDLATKLLPEVDD) the chain is Extracellular. A helical membrane pass occupies residues 115 to 135 (FLFSVSIVSGLMCVILAVAKF). Residues 136–144 (MLGRILTSR) lie on the Cytoplasmic side of the membrane. The chain crosses the membrane as a helical span at residues 145–165 (ALITDGFNSMVGGIMGFSILI). Topologically, residues 166-182 (SAEVFRHYPNVWYLDGT) are extracellular. The chain crosses the membrane as a helical span at residues 183 to 203 (IGILIGLVIQAYGVKLLVDMI). Over 204 to 216 (PRVRQTRNYERFE) the chain is Cytoplasmic.

This sequence belongs to the TMEM163 family.

Its subcellular location is the cytoplasmic vesicle. The protein localises to the secretory vesicle. It localises to the synaptic vesicle membrane. It is found in the early endosome membrane. The protein resides in the late endosome membrane. Its subcellular location is the lysosome membrane. The protein localises to the cell membrane. The catalysed reaction is Zn(2+)(in) = Zn(2+)(out). In terms of biological role, zinc ion transporter that mediates zinc efflux and plays a crucial role in intracellular zinc homeostasis. Binds the divalent cations Zn(2+), Ni(2+), and to a minor extent Cu(2+). Is a functional modulator of P2X purinoceptors, including P2RX1, P2RX3, P2RX4 and P2RX7. Plays a role in central nervous system development and is required for myelination, and survival and proliferation of oligodendrocytes. The chain is Transmembrane protein 163a from Danio rerio (Zebrafish).